Consider the following 282-residue polypeptide: Putative phosphatase MPN_383 (282 aa).

D11 functions as the Nucleophile in the catalytic mechanism. Residue D11 participates in Mg(2+) binding. L12 contributes to the phosphate binding site. Residue D13 participates in Mg(2+) binding. Phosphate is bound by residues 45–46 and K207; that span reads TG. D230 serves as a coordination point for Mg(2+). Residue N233 coordinates phosphate.

This sequence belongs to the HAD-like hydrolase superfamily. Cof family. It depends on Mg(2+) as a cofactor.

The sequence is that of Putative phosphatase MPN_383 from Mycoplasma pneumoniae (strain ATCC 29342 / M129 / Subtype 1) (Mycoplasmoides pneumoniae).